The chain runs to 165 residues: Acireductone dioxygenase (165 aa).

Fe(2+) is bound by residues His90, His92, Glu96, and His134. Residues His90, His92, Glu96, and His134 each contribute to the Ni(2+) site.

It belongs to the acireductone dioxygenase (ARD) family. As to quaternary structure, monomer. The cofactor is Fe(2+). Ni(2+) serves as cofactor.

The enzyme catalyses 1,2-dihydroxy-5-(methylsulfanyl)pent-1-en-3-one + O2 = 3-(methylsulfanyl)propanoate + CO + formate + 2 H(+). It catalyses the reaction 1,2-dihydroxy-5-(methylsulfanyl)pent-1-en-3-one + O2 = 4-methylsulfanyl-2-oxobutanoate + formate + 2 H(+). Its pathway is amino-acid biosynthesis; L-methionine biosynthesis via salvage pathway; L-methionine from S-methyl-5-thio-alpha-D-ribose 1-phosphate: step 5/6. In terms of biological role, catalyzes 2 different reactions between oxygen and the acireductone 1,2-dihydroxy-3-keto-5-methylthiopentene (DHK-MTPene) depending upon the metal bound in the active site. Fe-containing acireductone dioxygenase (Fe-ARD) produces formate and 2-keto-4-methylthiobutyrate (KMTB), the alpha-ketoacid precursor of methionine in the methionine recycle pathway. Ni-containing acireductone dioxygenase (Ni-ARD) produces methylthiopropionate, carbon monoxide and formate, and does not lie on the methionine recycle pathway. In Rhodopseudomonas palustris (strain ATCC BAA-98 / CGA009), this protein is Acireductone dioxygenase.